Reading from the N-terminus, the 677-residue chain is Methionine--tRNA ligase (677 aa).

Positions 15 to 25 (PYANGSIHLGH) match the 'HIGH' region motif. The Zn(2+) site is built by Cys-146, Cys-149, Cys-159, and Cys-162. The 'KMSKS' region motif lies at 333–337 (KMSKS). Lys-336 serves as a coordination point for ATP. Residues 575–677 (DFAKIDLRVA…DGAKPGQQVK (103 aa)) form the tRNA-binding domain.

It belongs to the class-I aminoacyl-tRNA synthetase family. MetG type 1 subfamily. In terms of assembly, homodimer. Requires Zn(2+) as cofactor.

It localises to the cytoplasm. It catalyses the reaction tRNA(Met) + L-methionine + ATP = L-methionyl-tRNA(Met) + AMP + diphosphate. In terms of biological role, is required not only for elongation of protein synthesis but also for the initiation of all mRNA translation through initiator tRNA(fMet) aminoacylation. The sequence is that of Methionine--tRNA ligase from Salmonella paratyphi C (strain RKS4594).